The chain runs to 754 residues: Cytosolic neutral trehalase (754 aa).

Over residues 1–10 the composition is skewed to polar residues; it reads MDGKVNNNPP. 2 disordered regions span residues 1–47 and 54–73; these read MDGK…LSKN and TFSV…YTSP. Asp117, Asp119, Asn121, Gln123, and Asp128 together coordinate Ca(2+). Substrate-binding positions include Arg305, 312-313, Asn349, 358-360, Glu427, Arg476, and Gly479; these read WD and RSQ. Catalysis depends on proton donor/acceptor residues Asp481 and Glu676.

The protein belongs to the glycosyl hydrolase 37 family. Requires Ca(2+) as cofactor.

The protein localises to the cytoplasm. It catalyses the reaction alpha,alpha-trehalose + H2O = alpha-D-glucose + beta-D-glucose. It participates in carbohydrate degradation. Hydrolyzes intracellular trehalose to glucose. The disaccharide trehalose serves as a storage molecule for energy and carbohydrates that is mobilized during nutrient stress. The protein is Cytosolic neutral trehalase of Kluyveromyces lactis (strain ATCC 8585 / CBS 2359 / DSM 70799 / NBRC 1267 / NRRL Y-1140 / WM37) (Yeast).